Consider the following 1035-residue polypeptide: POM121-like protein 2 (1035 aa).

Disordered stretches follow at residues 1–37 (MGSF…PLHQ), 177–213 (LFPE…PRPG), 286–343 (IKKE…LGYA), 415–508 (LGPL…QSTL), 754–791 (SPLG…QPAL), and 972–1035 (NTPV…AYKK). Residues 27 to 37 (TKRRPPQPLHQ) are compositionally biased toward basic residues. The segment covering 309-319 (GGSESSGQQNQ) has biased composition (low complexity). 3 stretches are compositionally biased toward polar residues: residues 320 to 330 (KIPQLPSSPEN), 420 to 431 (SPQSTGEATSVA), and 445 to 462 (GCSQ…SKPT). Residues 464-481 (TFILLTPTSPTLPVTDTT) show a composition bias toward low complexity. The segment covering 493 to 502 (PMPPDPPAPP) has biased composition (pro residues). Residues 1000 to 1016 (RGPFRSSASSFSIGAKS) show a composition bias toward low complexity. Basic residues predominate over residues 1017-1035 (KTPKNREKGHSRRHHAYKK).

This sequence belongs to the POM121 family.

The chain is POM121-like protein 2 (POM121L2) from Homo sapiens (Human).